The chain runs to 416 residues: Serine hydroxymethyltransferase (416 aa).

(6S)-5,6,7,8-tetrahydrofolate contacts are provided by residues Leu-118 and 122 to 124 (GHL). Lys-226 is subject to N6-(pyridoxal phosphate)lysine. (6S)-5,6,7,8-tetrahydrofolate-binding positions include Glu-242 and 350–352 (SPF).

Belongs to the SHMT family. Homodimer. Requires pyridoxal 5'-phosphate as cofactor.

It is found in the cytoplasm. The catalysed reaction is (6R)-5,10-methylene-5,6,7,8-tetrahydrofolate + glycine + H2O = (6S)-5,6,7,8-tetrahydrofolate + L-serine. The protein operates within one-carbon metabolism; tetrahydrofolate interconversion. It participates in amino-acid biosynthesis; glycine biosynthesis; glycine from L-serine: step 1/1. Its function is as follows. Catalyzes the reversible interconversion of serine and glycine with tetrahydrofolate (THF) serving as the one-carbon carrier. This reaction serves as the major source of one-carbon groups required for the biosynthesis of purines, thymidylate, methionine, and other important biomolecules. Also exhibits THF-independent aldolase activity toward beta-hydroxyamino acids, producing glycine and aldehydes, via a retro-aldol mechanism. This chain is Serine hydroxymethyltransferase, found in Helicobacter hepaticus (strain ATCC 51449 / 3B1).